The chain runs to 132 residues: Large ribosomal subunit protein bL12 (132 aa).

This sequence belongs to the bacterial ribosomal protein bL12 family. As to quaternary structure, homodimer. Part of the ribosomal stalk of the 50S ribosomal subunit. Forms a multimeric L10(L12)X complex, where L10 forms an elongated spine to which 2 to 4 L12 dimers bind in a sequential fashion. Binds GTP-bound translation factors.

Its function is as follows. Forms part of the ribosomal stalk which helps the ribosome interact with GTP-bound translation factors. Is thus essential for accurate translation. This chain is Large ribosomal subunit protein bL12, found in Ehrlichia canis (strain Jake).